Consider the following 129-residue polypeptide: Lysozyme C-2 (129 aa).

Residues 1 to 129 (KVFERCELAR…VSSYVEGCTL (129 aa)) form the C-type lysozyme domain. 4 disulfide bridges follow: Cys-6-Cys-127, Cys-30-Cys-115, Cys-65-Cys-81, and Cys-77-Cys-95. Active-site residues include Glu-35 and Asp-53.

This sequence belongs to the glycosyl hydrolase 22 family. In terms of assembly, monomer.

It carries out the reaction Hydrolysis of (1-&gt;4)-beta-linkages between N-acetylmuramic acid and N-acetyl-D-glucosamine residues in a peptidoglycan and between N-acetyl-D-glucosamine residues in chitodextrins.. Functionally, lysozymes have primarily a bacteriolytic function; those in tissues and body fluids are associated with the monocyte-macrophage system and enhance the activity of immunoagents. The sequence is that of Lysozyme C-2 from Capra hircus (Goat).